We begin with the raw amino-acid sequence, 337 residues long: tRNA N6-adenosine threonylcarbamoyltransferase (337 aa).

Fe cation-binding residues include histidine 111 and histidine 115. Residues 134–138, aspartate 167, glycine 180, and asparagine 272 contribute to the substrate site; that span reads LVSGG. Aspartate 300 is a binding site for Fe cation.

The protein belongs to the KAE1 / TsaD family. It depends on Fe(2+) as a cofactor.

The protein resides in the cytoplasm. It carries out the reaction L-threonylcarbamoyladenylate + adenosine(37) in tRNA = N(6)-L-threonylcarbamoyladenosine(37) in tRNA + AMP + H(+). In terms of biological role, required for the formation of a threonylcarbamoyl group on adenosine at position 37 (t(6)A37) in tRNAs that read codons beginning with adenine. Is involved in the transfer of the threonylcarbamoyl moiety of threonylcarbamoyl-AMP (TC-AMP) to the N6 group of A37, together with TsaE and TsaB. TsaD likely plays a direct catalytic role in this reaction. The protein is tRNA N6-adenosine threonylcarbamoyltransferase of Escherichia coli O157:H7.